A 33-amino-acid polypeptide reads, in one-letter code: Imperacalcin (33 aa).

3 disulfides stabilise this stretch: Cys3-Cys17, Cys10-Cys21, and Cys16-Cys32. Important for stimulation of [3H]ryanodine binding to RYR1 regions lie at residues 8-9 (KR) and 19-20 (KK). The interval 22-24 (KRR) is essential for stimulation of [3H]ryanodine binding to RYR1. An important for stimulation of [3H]ryanodine binding to RYR1 region spans residues 25–27 (GTN).

This sequence belongs to the scorpion calcin family. As to expression, expressed by the venom gland.

The protein localises to the secreted. In terms of biological role, this toxin affects the activity of ryanodine receptors 1, 2 and 3 (RyR1, RyR2 and RyR3). At lower concentrations the toxin increases full openings of the RyRs, and at higher concentrations it inhibits full openings and induces openings to subconductance levels (30% of the full conductance state) and reduces the number of full conductance openings. The different actions may be attributed to the toxins binding at different sites on the RyRs, with binding at a high-affinity site mediating the increase in full openings and the induction of subconductance states evoked upon binding to a lower-affinity site. Furthermore, it triggers calcium release from sarcoplasmic vesicles (11.7 nM are enough to induce a sharp release, and 70% of the total calcium is released after toxin (100 nM) addition) probably by acting as a cell-penetrating peptide (CPP). In addition, it has been shown to dose-dependently stimulate ryanodine binding to RyR1 (EC(50)=8.7 nM). It also augments the bell-shaped calcium-[3H]ryanodine binding curve that is maximal at about 10 uM calcium concentration. It binds a different site as ryanodine. It acts synergistically with caffeine. In vivo, intracerebroventricular injection into mice induces neurotoxic symptoms, followed by death. The protein is Imperacalcin of Pandinus imperator (Emperor scorpion).